The primary structure comprises 734 residues: Photosystem I P700 chlorophyll a apoprotein A2 (734 aa).

The next 8 membrane-spanning stretches (helical) occupy residues 46–69 (IFSS…FHVA), 135–158 (LYNG…LHLQ), 175–199 (LNHH…HVAI), 273–291 (MAHH…GHMY), 330–353 (LHMQ…QHMY), 369–395 (AALY…IFFI), 417–439 (AIIS…LYIH), and 517–535 (FLVH…LILV). [4Fe-4S] cluster-binding residues include Cys559 and Cys568. Transmembrane regions (helical) follow at residues 575 to 596 (AFYL…YWHW) and 643 to 665 (LSVW…MFLI). Residues His654, Met662, and Tyr670 each contribute to the chlorophyll a site. Residue Trp671 participates in phylloquinone binding. The helical transmembrane segment at 707–727 (LVGLVHFSVGYILTYAAFVIA) threads the bilayer.

Belongs to the PsaA/PsaB family. As to quaternary structure, the PsaA/B heterodimer binds the P700 chlorophyll special pair and subsequent electron acceptors. PSI consists of a core antenna complex that captures photons, and an electron transfer chain that converts photonic excitation into a charge separation. The eukaryotic PSI reaction center is composed of at least 11 subunits. The cofactor is P700 is a chlorophyll a/chlorophyll a' dimer, A0 is one or more chlorophyll a, A1 is one or both phylloquinones and FX is a shared 4Fe-4S iron-sulfur center..

It localises to the plastid. The protein localises to the chloroplast thylakoid membrane. The catalysed reaction is reduced [plastocyanin] + hnu + oxidized [2Fe-2S]-[ferredoxin] = oxidized [plastocyanin] + reduced [2Fe-2S]-[ferredoxin]. In terms of biological role, psaA and PsaB bind P700, the primary electron donor of photosystem I (PSI), as well as the electron acceptors A0, A1 and FX. PSI is a plastocyanin/cytochrome c6-ferredoxin oxidoreductase, converting photonic excitation into a charge separation, which transfers an electron from the donor P700 chlorophyll pair to the spectroscopically characterized acceptors A0, A1, FX, FA and FB in turn. Oxidized P700 is reduced on the lumenal side of the thylakoid membrane by plastocyanin or cytochrome c6. This Gracilaria tenuistipitata var. liui (Red alga) protein is Photosystem I P700 chlorophyll a apoprotein A2.